The sequence spans 191 residues: Dephospho-CoA kinase (191 aa).

One can recognise a DPCK domain in the interval 3 to 191; it reads AIGITGSYAS…KLIKDLECRV (189 aa). Position 11–16 (11–16) interacts with ATP; that stretch reads ASGKTF.

Belongs to the CoaE family.

It localises to the cytoplasm. It carries out the reaction 3'-dephospho-CoA + ATP = ADP + CoA + H(+). Its pathway is cofactor biosynthesis; coenzyme A biosynthesis; CoA from (R)-pantothenate: step 5/5. Functionally, catalyzes the phosphorylation of the 3'-hydroxyl group of dephosphocoenzyme A to form coenzyme A. The sequence is that of Dephospho-CoA kinase from Rickettsia conorii (strain ATCC VR-613 / Malish 7).